A 314-amino-acid polypeptide reads, in one-letter code: MATEMDKIFLTLATVEFIIGMLGNVFIGLVNCSEGIKNQKVFSVDFILTCLAISTIGHLLVILFDSCVVGLAPHLYATDRVRRPVTMLWHMXNHLTTWLATCLSIFYFFKIAHFPHSLFLWLRWRMNRVIAILLTLSLFLLIFDCLVLEMFIDXSLNIIDKSNLTLYLDESKTPYDKLSLLKILLSLNSFIPFSLCLTSLLFLFLSLVRHTRNLKLSSLGSRDSSTEAHRRAMKMVMSLLFLFIVHFFSLQVANWTFCILGNNKYTQFVTLALHAFPSCHSFILILGNSKLRQTAVRLLWHLRNYTKRPNPLPL.

Residues 1–7 (MATEMDK) are Extracellular-facing. Residues 8-28 (IFLTLATVEFIIGMLGNVFIG) form a helical membrane-spanning segment. Residues 29 to 50 (LVNCSEGIKNQKVFSVDFILTC) are Cytoplasmic-facing. A helical membrane pass occupies residues 51 to 71 (LAISTIGHLLVILFDSCVVGL). Residues 72–101 (APHLYATDRVRRPVTMLWHMXNHLTTWLAT) are Extracellular-facing. The helical transmembrane segment at 102–122 (CLSIFYFFKIAHFPHSLFLWL) threads the bilayer. At 123 to 127 (RWRMN) the chain is on the cytoplasmic side. A helical transmembrane segment spans residues 128 to 148 (RVIAILLTLSLFLLIFDCLVL). The Extracellular portion of the chain corresponds to 149–187 (EMFIDXSLNIIDKSNLTLYLDESKTPYDKLSLLKILLSL). Residue N163 is glycosylated (N-linked (GlcNAc...) asparagine). Residues 188-208 (NSFIPFSLCLTSLLFLFLSLV) traverse the membrane as a helical segment. Residues 209–238 (RHTRNLKLSSLGSRDSSTEAHRRAMKMVMS) lie on the Cytoplasmic side of the membrane. The chain crosses the membrane as a helical span at residues 239-259 (LLFLFIVHFFSLQVANWTFCI). The Extracellular portion of the chain corresponds to 260-265 (LGNNKY). Residues 266 to 286 (TQFVTLALHAFPSCHSFILIL) form a helical membrane-spanning segment. Residues 287-314 (GNSKLRQTAVRLLWHLRNYTKRPNPLPL) lie on the Cytoplasmic side of the membrane.

It belongs to the G-protein coupled receptor T2R family.

The protein localises to the membrane. Functionally, receptor that may play a role in the perception of bitterness and is gustducin-linked. May play a role in sensing the chemical composition of the gastrointestinal content. The activity of this receptor may stimulate alpha gustducin, mediate PLC-beta-2 activation and lead to the gating of TRPM5. This Macaca mulatta (Rhesus macaque) protein is Taste receptor type 2 member 42 (TAS2R42).